The chain runs to 1047 residues: Exportin-6 (1047 aa).

One can recognise an Importin N-terminal domain in the interval 32 to 98; the sequence is IDTILNNYKA…KGLLLDIYLN (67 aa).

The protein belongs to the exportin family.

Its subcellular location is the nucleus. It is found in the cytoplasm. Probably mediates the nuclear export of actin and profilin-actin complexes. This chain is Exportin-6 (xpo6), found in Dictyostelium discoideum (Social amoeba).